A 259-amino-acid polypeptide reads, in one-letter code: MVQLTLPKNSRMRVGKTWPKPEGATNVRRFNIYRWDPDTGENPRIDTYFVDMDKCGPMVLDALIKIKNEIDPTLTFRRSCREGICGSCAMNIDGGNHLACIYGMDEIKGDVNIYPLPHMPVVKDLVPDLTHFYAQHASVQPYLITETPTPDKEWRQSIEDRKKLDGLYECVMCASCSTACPSYWWNGDRYLGPAALLHAYRWIIDSRDEATGERLDSLEDPFKLYRCHTIMNCTNTCPKGLNPAKAIASIKHMMVDRIV.

The 2Fe-2S ferredoxin-type domain maps to arginine 28 to methionine 119. Residues cysteine 80, cysteine 85, and cysteine 100 each coordinate [2Fe-2S] cluster. Positions aspartate 160–tyrosine 190 constitute a 4Fe-4S ferredoxin-type domain. The [4Fe-4S] cluster site is built by cysteine 170, cysteine 173, and cysteine 176. Cysteine 180 contributes to the [3Fe-4S] cluster binding site. Tryptophan 185 provides a ligand contact to a ubiquinone. 2 residues coordinate [3Fe-4S] cluster: cysteine 227 and cysteine 233. Cysteine 237 contacts [4Fe-4S] cluster.

This sequence belongs to the succinate dehydrogenase/fumarate reductase iron-sulfur protein family. Part of an enzyme complex containing four subunits: a flavoprotein, an iron-sulfur, cytochrome b-556, and a hydrophobic anchor protein. [2Fe-2S] cluster serves as cofactor. Requires [3Fe-4S] cluster as cofactor. It depends on [4Fe-4S] cluster as a cofactor.

The catalysed reaction is a quinone + succinate = fumarate + a quinol. The protein operates within carbohydrate metabolism; tricarboxylic acid cycle; fumarate from succinate (bacterial route): step 1/1. The chain is Succinate dehydrogenase iron-sulfur subunit (sdhB) from Paracoccus denitrificans.